A 422-amino-acid polypeptide reads, in one-letter code: UDP-N-acetylglucosamine 1-carboxyvinyltransferase (422 aa).

22–23 (KN) contacts phosphoenolpyruvate. Arg-92 provides a ligand contact to UDP-N-acetyl-alpha-D-glucosamine. The active-site Proton donor is Cys-116. At Cys-116 the chain carries 2-(S-cysteinyl)pyruvic acid O-phosphothioketal. UDP-N-acetyl-alpha-D-glucosamine contacts are provided by Asp-306 and Ile-328.

This sequence belongs to the EPSP synthase family. MurA subfamily.

Its subcellular location is the cytoplasm. It carries out the reaction phosphoenolpyruvate + UDP-N-acetyl-alpha-D-glucosamine = UDP-N-acetyl-3-O-(1-carboxyvinyl)-alpha-D-glucosamine + phosphate. Its pathway is cell wall biogenesis; peptidoglycan biosynthesis. Its function is as follows. Cell wall formation. Adds enolpyruvyl to UDP-N-acetylglucosamine. This is UDP-N-acetylglucosamine 1-carboxyvinyltransferase from Elusimicrobium minutum (strain Pei191).